Reading from the N-terminus, the 86-residue chain is Cell division topological specificity factor (86 aa).

The protein belongs to the MinE family.

In terms of biological role, prevents the cell division inhibition by proteins MinC and MinD at internal division sites while permitting inhibition at polar sites. This ensures cell division at the proper site by restricting the formation of a division septum at the midpoint of the long axis of the cell. The polypeptide is Cell division topological specificity factor (Photobacterium profundum (strain SS9)).